A 67-amino-acid polypeptide reads, in one-letter code: MMSKLGVLLTICLLLFPLTAVQLDGDQPADLPELRAQDFAPERSPWFDPVRRCCSQDCRVCIPCCPN.

A signal peptide spans M1–A20. The propeptide occupies V21 to V50. Intrachain disulfides connect C53–C65, C54–C61, and C58–C64. P63 is subject to 4-hydroxyproline.

The protein belongs to the conotoxin M superfamily. Expressed by the venom duct.

The protein resides in the secreted. The polypeptide is Conotoxin TsMMSK-B021 (Conus tessulatus (Tessellate cone)).